The chain runs to 201 residues: Pyrrolidone-carboxylate peptidase (201 aa).

Residues E78, C141, and H165 contribute to the active site.

Belongs to the peptidase C15 family. Homotetramer.

It localises to the cytoplasm. It carries out the reaction Release of an N-terminal pyroglutamyl group from a polypeptide, the second amino acid generally not being Pro.. Functionally, removes 5-oxoproline from various penultimate amino acid residues except L-proline. The protein is Pyrrolidone-carboxylate peptidase of Brachyspira hyodysenteriae (strain ATCC 49526 / WA1).